Consider the following 1414-residue polypeptide: MKALLDLFKQVQQNEQFDAIKIGLASPEKIRSWSYGEVKKPETINYRTFKPERDGLFCAKIFGPIKDYECLCGKYKRLKHRGVICEKCGVEVTLAKVRRERMGHIELASPTAHIWFLKSLPSRLGMVLDMTLRDIERVLYFEAYVVTDPGMTPLKKCQIMSEDDYAAKYEEFGDDFTAFMGAEGIRELLRAIDIDRDAEMLRQELKDSKSEAKIKKYAKRLKVLEAFQRSGIKPDWMIMEVLPVLPPELRPLVPLDGGRFATSDLNDLYRRVINRNNRLKRLMELRAPEIITRNEKRMLQEAVDSLLDNGRRGKAMTGANKRPLKSLAEMIKGKGGRFRQNLLGKRVDYSGRSVIVVGPQLKLHQCGLPKLMALELFKPFIFNKLELMGLATTIKAAKKLVEIQEPVVWDILEDVIREHPVMLNRAPTLHRLGIQAFEPVLIEGKAIQLHPLVCAAFNADFDGDQMAVHVPLSIEAQMEARTLMLASNNILFPSNGEPSIVPSQDIVLGLYYASREAINAKGEGMMFPDVSEVIRAYDNKMVELATRITVRITEYPKNVETGEFEKTVTRYETTVGRAILSEILPKGLPFSVLNRALKKKEISRLINLSFRKCGLRATVVFADQLLQSGFRLATRAGISICVDDMLVPKQKVDIIATAESEVKQIEQQYSSGLVTAGERYNKVVDIWGKAGDDVGKAMMDQLKVEDVTKRDGTKTTQESFNAIYMMADSGARGSAAQIRQLAGMRGLMAKPDGSIIETPITANFREGLNVLQYFISTHGARKGLADTALKTANSGYLTRRLVDVTQDLVVIEDDCGTSNGASMKALVEGGEVIEALRDRILGRVAANDIVNPETQATLYAAGTLLDEDMVEEIERLGIDEVKVRTPLTCDTRFGLCAQCYGRDLGRGTLVNAGEAVGVVAAQSIGEPGTQLTMRTFHIGGAASRAAVASSVEAKSNGTVRFTATMRYVTNGKGGQIVISRSGEVLITDDHGRERERHKVPYGATLIVKDGMVIKAGTALATWDPLTRPIITEYTGTVKFENVEEGSTVARQIDEVTGLSTLVVIDAKRRGSVTKTVRPQVKLLNEQGEEVKIAGTEHAVTIGFQVGALITVKDGQQVTVGEVLARIPTESQKTRDITGGLPRVAELFEARSPKDAGMLAEVTGTVAFGKETKGKQRLEITDMDGNKHEFLITKDKQVLVHDGQVVNKGEMIVDGPADPQDILRLLGIEALARYIVDEVQDVYRLQGVKINDKHIEVIVRQMLRRVQVVDAGDANYIVGEQVERSELLDENDRVIALGKIPATYENVLLGITKASLSTDSFISAASFQETTRVLTEAAIMGKKDGLRGLKENVIVGRLIPAGTGLAFHRARKEKDSWEAEERAALLQSEKAARAAEAEAQFADVSSTPDSDTDAS.

Zn(2+) contacts are provided by Cys-70, Cys-72, Cys-85, and Cys-88. Mg(2+) is bound by residues Asp-460, Asp-462, and Asp-464. Zn(2+)-binding residues include Cys-815, Cys-889, Cys-896, and Cys-899. The interval 1395 to 1414 (EAEAQFADVSSTPDSDTDAS) is disordered.

The protein belongs to the RNA polymerase beta' chain family. The RNAP catalytic core consists of 2 alpha, 1 beta, 1 beta' and 1 omega subunit. When a sigma factor is associated with the core the holoenzyme is formed, which can initiate transcription. Mg(2+) serves as cofactor. The cofactor is Zn(2+).

It carries out the reaction RNA(n) + a ribonucleoside 5'-triphosphate = RNA(n+1) + diphosphate. Functionally, DNA-dependent RNA polymerase catalyzes the transcription of DNA into RNA using the four ribonucleoside triphosphates as substrates. This is DNA-directed RNA polymerase subunit beta' from Janthinobacterium sp. (strain Marseille) (Minibacterium massiliensis).